A 436-amino-acid chain; its full sequence is Histidine--tRNA ligase (436 aa).

The protein belongs to the class-II aminoacyl-tRNA synthetase family. In terms of assembly, homodimer.

It localises to the cytoplasm. It catalyses the reaction tRNA(His) + L-histidine + ATP = L-histidyl-tRNA(His) + AMP + diphosphate + H(+). This chain is Histidine--tRNA ligase, found in Prochlorococcus marinus (strain MIT 9303).